Here is a 318-residue protein sequence, read N- to C-terminus: Protein FdhE homolog (318 aa).

It belongs to the FdhE family.

Its subcellular location is the cytoplasm. Functionally, necessary for formate dehydrogenase activity. The chain is Protein FdhE homolog from Pseudomonas putida (strain ATCC 47054 / DSM 6125 / CFBP 8728 / NCIMB 11950 / KT2440).